The chain runs to 366 residues: Probable quinol oxidase subunit 2 (366 aa).

The first 19 residues, 1–19, serve as a signal peptide directing secretion; sequence MSKFKSLLLLFGTLILLSG. Cys20 carries the N-palmitoyl cysteine lipid modification. Cys20 carries the S-diacylglycerol cysteine lipid modification. A run of 2 helical transmembrane segments spans residues 38-58 and 80-100; these read FLIL…LGMF and AIIE…LAIP. The disordered stretch occupies residues 330 to 366; sequence EPYNNEFKKDESKNAKEMKKISKDAQDQDNDDHGGGH. Over residues 335–366 the composition is skewed to basic and acidic residues; that stretch reads EFKKDESKNAKEMKKISKDAQDQDNDDHGGGH.

Belongs to the cytochrome c oxidase subunit 2 family.

The protein resides in the cell membrane. It catalyses the reaction 2 a quinol + O2 = 2 a quinone + 2 H2O. Functionally, catalyzes quinol oxidation with the concomitant reduction of oxygen to water. Subunit II transfers the electrons from a quinol to the binuclear center of the catalytic subunit I. This is Probable quinol oxidase subunit 2 (qoxA) from Staphylococcus aureus (strain USA300).